A 203-amino-acid polypeptide reads, in one-letter code: Small ribosomal subunit protein uS4c (203 aa).

The segment at proline 19 to glutamine 43 is disordered. The S4 RNA-binding domain maps to methionine 89–leucine 152.

The protein belongs to the universal ribosomal protein uS4 family. As to quaternary structure, part of the 30S ribosomal subunit. Contacts protein S5. The interaction surface between S4 and S5 is involved in control of translational fidelity.

It localises to the plastid. The protein localises to the chloroplast. Functionally, one of the primary rRNA binding proteins, it binds directly to 16S rRNA where it nucleates assembly of the body of the 30S subunit. In terms of biological role, with S5 and S12 plays an important role in translational accuracy. This Jasminum nudiflorum (Winter jasmine) protein is Small ribosomal subunit protein uS4c (rps4).